A 356-amino-acid polypeptide reads, in one-letter code: MRLPQARLDQVLDRFREVEARMGAATDGAEIVKLSKEHAELRPVAEAVERLAKLSAERAELDVMASDPEMAEMVRDEIQALDEKLPVMERELALMLAPKDKDENASAILEVRAGTGGDEAALFAGDLFRMYQRYAQTQGWRVEIDSISEGEMGGFKEIVASITGDGVFGRLKFESGVHRVQRVPATEAQGRIHTSAATVAVLPEAEDVEIEIKESDLRIDTYRSSGAGGQHVNKTDSAVRITHLPTGVVVTSSEKSQHQNRARAMKNLKARLYDMQREALDSARSEARKSQVGSGDRSERIRTYNFPQGRVTDHRINLTLYNLARIMEGDALDDVINPLIAEDQAERLASLEESFS.

At Gln-230 the chain carries N5-methylglutamine. Over residues 279–289 (ALDSARSEARK) the composition is skewed to basic and acidic residues. The segment at 279 to 299 (ALDSARSEARKSQVGSGDRSE) is disordered.

The protein belongs to the prokaryotic/mitochondrial release factor family. Post-translationally, methylated by PrmC. Methylation increases the termination efficiency of RF1.

It is found in the cytoplasm. Its function is as follows. Peptide chain release factor 1 directs the termination of translation in response to the peptide chain termination codons UAG and UAA. The polypeptide is Peptide chain release factor 1 (prfA) (Caulobacter vibrioides (strain ATCC 19089 / CIP 103742 / CB 15) (Caulobacter crescentus)).